The following is a 276-amino-acid chain: NADPH-dependent 7-cyano-7-deazaguanine reductase (276 aa).

80 to 82 (IES) provides a ligand contact to substrate. Position 82-83 (82-83 (SK)) interacts with NADPH. The active-site Thioimide intermediate is Cys-178. Asp-185 serves as the catalytic Proton donor. 217–218 (HE) lines the substrate pocket. NADPH is bound at residue 246–247 (RG).

Belongs to the GTP cyclohydrolase I family. QueF type 2 subfamily. In terms of assembly, homodimer.

It is found in the cytoplasm. The enzyme catalyses 7-aminomethyl-7-carbaguanine + 2 NADP(+) = 7-cyano-7-deazaguanine + 2 NADPH + 3 H(+). It functions in the pathway tRNA modification; tRNA-queuosine biosynthesis. In terms of biological role, catalyzes the NADPH-dependent reduction of 7-cyano-7-deazaguanine (preQ0) to 7-aminomethyl-7-deazaguanine (preQ1). In Teredinibacter turnerae (strain ATCC 39867 / T7901), this protein is NADPH-dependent 7-cyano-7-deazaguanine reductase.